The following is a 420-amino-acid chain: Histidine--tRNA ligase (420 aa).

Belongs to the class-II aminoacyl-tRNA synthetase family. Homodimer.

It is found in the cytoplasm. It catalyses the reaction tRNA(His) + L-histidine + ATP = L-histidyl-tRNA(His) + AMP + diphosphate + H(+). The chain is Histidine--tRNA ligase from Anaplasma phagocytophilum (strain HZ).